A 184-amino-acid chain; its full sequence is Probable N-acetyltransferase san (184 aa).

The N-acetyltransferase domain occupies 6 to 155 (IELGDVTPHN…DAHVLQKTLR (150 aa)). A substrate-binding site is contributed by Tyr-31. Lys-47 bears the N6-acetyllysine; by autocatalysis mark. Residue Tyr-73 is part of the active site. Met-75 is a binding site for substrate. An acetyl-CoA-binding site is contributed by 77–90 (LGCLSPYRRLGIGT). The active site involves His-112. Residue 117–126 (NNGAIEFYKK) coordinates CoA. The interval 138-141 (YYKR) is substrate. Positions 157 to 174 (TAPNSNSTATSTTANSNS) are enriched in low complexity. A disordered region spans residues 157 to 176 (TAPNSNSTATSTTANSNSRS).

It belongs to the acetyltransferase family. In terms of assembly, component of an acetyltransferase complex, at least composed of san, Ard1 and Nat1. In terms of processing, autoacetylated.

Its subcellular location is the cytoplasm. It catalyses the reaction N-terminal L-methionyl-L-alanyl-[protein] + acetyl-CoA = N-terminal N(alpha)-acetyl-L-methionyl-L-alanyl-[protein] + CoA + H(+). It carries out the reaction N-terminal L-methionyl-L-seryl-[protein] + acetyl-CoA = N-terminal N(alpha)-acetyl-L-methionyl-L-seryl-[protein] + CoA + H(+). The catalysed reaction is N-terminal L-methionyl-L-valyl-[protein] + acetyl-CoA = N-terminal N(alpha)-acetyl-L-methionyl-L-valyl-[protein] + CoA + H(+). The enzyme catalyses N-terminal L-methionyl-L-threonyl-[protein] + acetyl-CoA = N-terminal N(alpha)-acetyl-L-methionyl-L-threonyl-[protein] + CoA + H(+). It catalyses the reaction N-terminal L-methionyl-L-lysyl-[protein] + acetyl-CoA = N-terminal N(alpha)-acetyl-L-methionyl-L-lysyl-[protein] + CoA + H(+). It carries out the reaction N-terminal L-methionyl-L-leucyl-[protein] + acetyl-CoA = N-terminal N(alpha)-acetyl-L-methionyl-L-leucyl-[protein] + CoA + H(+). The catalysed reaction is N-terminal L-methionyl-L-phenylalanyl-[protein] + acetyl-CoA = N-terminal N(alpha)-acetyl-L-methionyl-L-phenylalanyl-[protein] + CoA + H(+). The enzyme catalyses N-terminal L-methionyl-L-tyrosyl-[protein] + acetyl-CoA = N-terminal N(alpha)-acetyl-L-methionyl-L-tyrosyl-[protein] + CoA + H(+). In terms of biological role, N-alpha-acetyltransferase that acetylates the N-terminus of proteins that retain their initiating methionine. Has a broad substrate specificity: able to acetylate the initiator methionine of most peptides. Also displays N-epsilon-acetyltransferase activity by mediating acetylation of the side chain of specific lysines on proteins. Autoacetylates. Required for the establishment of sister chromatid cohesion and couple the processes of cohesion and DNA replication to ensure that only sister chromatids become paired together. Required for the interaction between Scc1/vtd and SMC3, possibly by mediating N-terminal acetylation of Scc1/vtd. (Microbial infection) Required for optimal replication of E.chaffeensis in the immune tissues, hemocytes, and fat body. The protein is Probable N-acetyltransferase san (san) of Drosophila melanogaster (Fruit fly).